The primary structure comprises 168 residues: MAFNFGHLLIAGLVALSAVSSETIQLQPTQGILIPAPLAENIRVSRAAYGGYGAAPAAPSYSAPAAPAAQAYSAPAAPAYSAPAAPAYSAPAAPAYSAPAAPAYSAPAAPAYSAPASIPSPPCPKNYLFSCQPSLQPVPCSAPAQSYGSAGAYSQYVPQYAVPFVREL.

The signal sequence occupies residues 1-23 (MAFNFGHLLIAGLVALSAVSSET). The propeptide at 24–42 (IQLQPTQGILIPAPLAENI) is removed between stage 11 and 14 of oogenesis. An essential for N-terminal propeptide removal. Potential serine protease cleavage site region spans residues 43-46 (RVSR). Positions 52–119 (YGAAPAAPSY…PAYSAPASIP (68 aa)) are 8 X 8 AA approximate repeats of P-[AS]-Y-S-A-P-A-[AS]. Residues 55–58 (APAA) form a 1; half-length repeat. Repeat 2 spans residues 59-66 (PSYSAPAA). The stretch at 70 to 77 (QAYSAPAA) is one 3; approximate repeat. 5 repeat units span residues 78 to 85 (PAYSAPAA), 86 to 93 (PAYSAPAA), 94 to 101 (PAYSAPAA), 102 to 109 (PAYSAPAA), and 110 to 117 (PAYSAPAS). The VM domain occupies 117-154 (SIPSPPCPKNYLFSCQPSLQPVPCSAPAQSYGSAGAYS). A propeptide spans 155–168 (QYVPQYAVPFVREL) (removed between stage 9 and 12 of oogenesis).

The protein belongs to the vitelline membrane protein family. In terms of assembly, interacts with vml and Vm26Aa; forms part of a disulfide-linked network within the vitelline membrane of stage 10 egg chambers. Post-translationally, proteolytically processed after secretion into the perivitelline space. Undergoes several proteolytic processing steps during formation of the vitelline membrane; an initial processing step removing a C-terminal propeptide occurs between stage 9 and 12 of oogenesis while a second removing a N-terminal propeptide occurs between stage 11 and 14. In terms of processing, becomes part of a disulfide-linked network including other vitelline membrane proteins, including vml and Vm26Aa, during vitelline membrane biogenesis and maturation. Cys-123, Cys-131 and Cys-140 are involved in disulfide network formation, with Cys-131 being the most important. Undergoes both disulfide and non-disulfide cross-linking upon incorporation into the vitelline membrane. As to expression, follicle cells.

It is found in the secreted. The protein localises to the extracellular space. The protein resides in the extracellular matrix. Major early eggshell protein secreted by follicle cells into the perivitelline space and incorporated into the vitelline membrane. Involved in vitelline membrane biogenesis; forms a cross-linked network with other vitelline membrane components. This Drosophila melanogaster (Fruit fly) protein is Vitelline membrane protein Vm26Ab.